Consider the following 108-residue polypeptide: N(4)-acetylcytidine amidohydrolase (108 aa).

The ASCH domain occupies 5-102; the sequence is ITFFQRLERS…NDLFFISFRV (98 aa). Residue K20 is the Proton acceptor of the active site. The active-site Nucleophile is T23. E73 serves as the catalytic Proton donor.

This sequence belongs to the N(4)-acetylcytidine amidohydrolase family.

It carries out the reaction N(4)-acetylcytidine + H2O = cytidine + acetate + H(+). The enzyme catalyses N(4)-acetyl-2'-deoxycytidine + H2O = 2'-deoxycytidine + acetate + H(+). The catalysed reaction is N(4)-acetylcytosine + H2O = cytosine + acetate + H(+). Functionally, catalyzes the hydrolysis of N(4)-acetylcytidine (ac4C). The polypeptide is N(4)-acetylcytidine amidohydrolase (Moritella marina (Vibrio marinus)).